Reading from the N-terminus, the 256-residue chain is Thiazole synthase (256 aa).

K95 (schiff-base intermediate with DXP) is an active-site residue. Residues G156, 182–183 (AG), and 204–205 (NT) each bind 1-deoxy-D-xylulose 5-phosphate.

This sequence belongs to the ThiG family. As to quaternary structure, homotetramer. Forms heterodimers with either ThiH or ThiS.

The protein localises to the cytoplasm. The enzyme catalyses [ThiS sulfur-carrier protein]-C-terminal-Gly-aminoethanethioate + 2-iminoacetate + 1-deoxy-D-xylulose 5-phosphate = [ThiS sulfur-carrier protein]-C-terminal Gly-Gly + 2-[(2R,5Z)-2-carboxy-4-methylthiazol-5(2H)-ylidene]ethyl phosphate + 2 H2O + H(+). It participates in cofactor biosynthesis; thiamine diphosphate biosynthesis. Functionally, catalyzes the rearrangement of 1-deoxy-D-xylulose 5-phosphate (DXP) to produce the thiazole phosphate moiety of thiamine. Sulfur is provided by the thiocarboxylate moiety of the carrier protein ThiS. In vitro, sulfur can be provided by H(2)S. In Salmonella agona (strain SL483), this protein is Thiazole synthase.